Here is a 239-residue protein sequence, read N- to C-terminus: Sensory rhodopsin-1 (239 aa).

The Extracellular portion of the chain corresponds to Met-1 to Ala-3. A helical transmembrane segment spans residues Val-4–Leu-25. Topologically, residues Tyr-26–His-34 are cytoplasmic. Residues Gln-35–Ala-56 form a helical membrane-spanning segment. Topologically, residues Tyr-57–Val-70 are extracellular. A helical transmembrane segment spans residues Gly-71–Ala-92. At Gly-93–Ser-95 the chain is on the cytoplasmic side. Residues Arg-96–Val-118 form a helical membrane-spanning segment. Residues Thr-119 to Thr-122 are Extracellular-facing. Residues Leu-123–Val-150 traverse the membrane as a helical segment. The Cytoplasmic portion of the chain corresponds to Pro-151–Val-153. A helical membrane pass occupies residues Pro-154–Gly-181. The Extracellular segment spans residues Pro-182–Thr-189. Residues Ala-190–Ser-222 traverse the membrane as a helical segment. Lys-205 carries the post-translational modification N6-(retinylidene)lysine. Residues Glu-223 to Asp-239 are Cytoplasmic-facing.

The protein belongs to the archaeal/bacterial/fungal opsin family. In terms of assembly, interacts with HTR-I.

It is found in the cell membrane. Its function is as follows. Involved in the control of phototaxis. Mediates both photoattractant (in the orange light) and photophobic (in the near UV light) responses. The signal is then transmitted to the sensory rhodopsin I transducer (HTR-I). The polypeptide is Sensory rhodopsin-1 (sopI) (Halobacterium salinarum (strain ATCC 29341 / DSM 671 / R1)).